A 149-amino-acid chain; its full sequence is L-alanine exporter AlaE (149 aa).

The next 4 membrane-spanning stretches (helical) occupy residues 16 to 36, 46 to 66, 85 to 105, and 112 to 132; these read FAMV…LSGM, LVAI…RDLF, ILAY…VVGA, and AAVS…GYFL.

The protein belongs to the AlaE exporter family.

It is found in the cell inner membrane. Its function is as follows. Exports L-alanine. The protein is L-alanine exporter AlaE of Shigella flexneri.